Reading from the N-terminus, the 86-residue chain is Kappa-theraphotoxin-Cg1a 5 (86 aa).

A signal peptide spans 1–21; that stretch reads MKVSVLITLAVLGVMFVWTSA. Residues 22–50 constitute a propeptide that is removed on maturation; that stretch reads AELEERGSDQRDSPAWLKSMERIFQSEER. 3 cysteine pairs are disulfide-bonded: Cys52-Cys66, Cys59-Cys71, and Cys65-Cys78. A Phenylalanine amide modification is found at Phe84.

This sequence belongs to the neurotoxin 10 (Hwtx-1) family. 28 (Jztx-11) subfamily. As to expression, expressed by the venom gland.

The protein resides in the secreted. Functionally, this toxin acts as a voltage-dependent gating-modifier. It inhibits the sodium conductance (IC(50)=124 nM) and slows the fast inactivation (EC(50)=1180 nM) of Nav1.5/SCN5A. It significantly shifts the activation to more depolarized voltages and decreases the deactivation of Nav1.5 currents upon extreme depolarization, but only slightly affects voltage-dependence of steady-state inactivation. In addition, this toxin causes an approximately five-fold decrease in the rate of recovery from inactivation and an approximately 1.9-fold reduction in the closed-state inactivation rate. This toxin integrates the functions of site 3 toxins (alpha-scorpion toxins) with site 4 toxins (beta-scorpion and spider toxins) by targeting multiple sites on Nav1.5. Also shows inhibition of voltage-gated potassium channels (5 uM completely inhibits Kv2.1/KCNB1, whereas 5 uM moderately inhibits Kv4.2/KCND2 Kv4.1/KCND1 channels). The polypeptide is Kappa-theraphotoxin-Cg1a 5 (Chilobrachys guangxiensis (Chinese earth tiger tarantula)).